Reading from the N-terminus, the 3075-residue chain is Lovastatin nonaketide synthase mokA (3075 aa).

Residues 49 to 488 (NEPIVVVGSG…GTNAHAIIEE (440 aa)) form the Ketosynthase family 3 (KS3) domain. Catalysis depends on for beta-ketoacyl synthase activity residues Cys-222, His-361, and His-408. The segment at 603–945 (VFTGQGAQWP…AYLWEQFGIP (343 aa)) is acyl and malonyl transferase. The active-site For malonyltransferase activity is Ser-697. Residues 997–1133 (HLLLGKLSEY…GQLVVTLDEG (137 aa)) form an N-terminal hotdog fold region. The PKS/mFAS DH domain maps to 997–1311 (HLLLGKLSEY…FKPFSPPTAS (315 aa)). Catalysis depends on His-1029, which acts as the Proton acceptor; for dehydratase activity. A dehydratase-like region spans residues 1029–1041 (HALQGQVVFPAAG). Residues 1156–1311 (MNRVNINSFY…FKPFSPPTAS (156 aa)) are C-terminal hotdog fold. The active-site Proton donor; for dehydratase activity is Asp-1218. The interval 1556-1594 (YDLIIASNVLHATPDLEKTMAHARSLLKPGGQMVILEIT) is methyltransferase. The tract at residues 2176–2470 (ALPARIRPID…FKIPERRGKA (295 aa)) is beta-ketoacyl reductase. Residues 2492–2571 (DQVRQIVIDG…DLADDAAARL (80 aa)) form the Carrier domain. An O-(pantetheine 4'-phosphoryl)serine modification is found at Ser-2531. A disordered region spans residues 2582–2624 (SEGGAETSDNDTSGPEGTDLSASTTITEPSSADEEDEKQEDDN). Residues 2591-2611 (NDTSGPEGTDLSASTTITEPS) show a composition bias toward polar residues. Residues 2612-2624 (SADEEDEKQEDDN) show a composition bias toward acidic residues. Residues 2633–2989 (PLSLGQEYAW…AETAEPAPLF (357 aa)) form a peptide synthetase elongation region.

Requires pantetheine 4'-phosphate as cofactor.

The enzyme catalyses holo-[lovastatin nonaketide synthase] + 9 malonyl-CoA + S-adenosyl-L-methionine + 11 NADPH + 19 H(+) = dihydromonacolin L-[lovastatin nonaketide synthase] + S-adenosyl-L-homocysteine + 9 CO2 + 11 NADP(+) + 9 CoA + 6 H2O. It functions in the pathway polyketide biosynthesis; lovastatin biosynthesis. Nonaketide synthase; part of the gene cluster that mediates the biosynthesis of monakolin K, also known as lovastatin, and which acts as a potent competitive inhibitor of HMG-CoA reductase. Monakolin K biosynthesis is performed in two stages. The first stage is catalyzed by the nonaketide synthase mokA, which belongs to type I polyketide synthases and catalyzes the iterative nine-step formation of the polyketide. This PKS stage is completed by the action of dehydrogenase mokE, which catalyzes the NADPH-dependent reduction of the unsaturated tetra-, penta- and heptaketide intermediates that arise during the mokA-mediated biosynthesis of the nonaketide chain and leads to dihydromonacolin L. Covalently bound dihydromonacolin L is released from mokA by the mokD esterase. Conversion of dihydromonacolin L into monacolin L and then monacolin J is subsequently performed with the participation of molecular oxygen and P450 monoogygenase mokC. Finally, mokF performs the conversion of monacoline J to monacoline K through the addition of the side-chain diketide moiety (2R)-2-methylbutanoate produced by the diketide synthase mokB. The sequence is that of Lovastatin nonaketide synthase mokA from Monascus pilosus (Red mold).